An 86-amino-acid chain; its full sequence is MSKGHSLQDPYLNTLRKEKVPVSIYLVNGIKLQGSIESFDQFVVLLKNTVSQMVYKHAISTVVPARPVRLPSPTDGEHGDSEPGNA.

The 60-residue stretch at 9-68 folds into the Sm domain; sequence DPYLNTLRKEKVPVSIYLVNGIKLQGSIESFDQFVVLLKNTVSQMVYKHAISTVVPARPV. Residues 67–86 form a disordered region; the sequence is PVRLPSPTDGEHGDSEPGNA. The segment covering 75 to 86 has biased composition (basic and acidic residues); it reads DGEHGDSEPGNA.

This sequence belongs to the Hfq family. As to quaternary structure, homohexamer.

Its function is as follows. RNA chaperone that binds small regulatory RNA (sRNAs) and mRNAs to facilitate mRNA translational regulation in response to envelope stress, environmental stress and changes in metabolite concentrations. Also binds with high specificity to tRNAs. This Pseudomonas putida (strain GB-1) protein is RNA-binding protein Hfq.